A 670-amino-acid chain; its full sequence is Protein-glutamine gamma-glutamyltransferase 4 (670 aa).

Residues Asn-151 and Asn-219 are each glycosylated (N-linked (GlcNAc...) asparagine). Cys-255 is a catalytic residue. A glycan (N-linked (GlcNAc...) asparagine) is linked at Asn-288. Catalysis depends on residues His-314 and Asp-337. Ca(2+) contacts are provided by Asn-377, Asp-379, Glu-429, and Glu-434. 2 N-linked (GlcNAc...) asparagine glycosylation sites follow: Asn-456 and Asn-491.

Belongs to the transglutaminase superfamily. Transglutaminase family. In terms of assembly, homodimer. Ca(2+) is required as a cofactor. In terms of tissue distribution, expressed in the coagulating gland and in the dorsal part of the prostate. Not expressed in the brain, heart, kidney, liver, lung, muscle, pancreas, spleen, stomach, testis and thymus.

Its subcellular location is the secreted. The catalysed reaction is L-glutaminyl-[protein] + L-lysyl-[protein] = [protein]-L-lysyl-N(6)-5-L-glutamyl-[protein] + NH4(+). Its function is as follows. Associated with the mammalian reproductive process. Plays an important role in the formation of the seminal coagulum through the cross-linking of specific proteins present in the seminal plasma. Transglutaminase is also required to stabilize the copulatory plug. The polypeptide is Protein-glutamine gamma-glutamyltransferase 4 (Mus musculus (Mouse)).